A 186-amino-acid chain; its full sequence is Elongation factor P (186 aa).

The protein belongs to the elongation factor P family.

The protein localises to the cytoplasm. It participates in protein biosynthesis; polypeptide chain elongation. In terms of biological role, involved in peptide bond synthesis. Stimulates efficient translation and peptide-bond synthesis on native or reconstituted 70S ribosomes in vitro. Probably functions indirectly by altering the affinity of the ribosome for aminoacyl-tRNA, thus increasing their reactivity as acceptors for peptidyl transferase. The sequence is that of Elongation factor P from Coprothermobacter proteolyticus (strain ATCC 35245 / DSM 5265 / OCM 4 / BT).